Reading from the N-terminus, the 31-residue chain is Cyclotide cter-D (31 aa).

Positions 1–31 (GIPCAESCVWIPCTVTALLGCSCKDKVCYLN) form a cross-link, cyclopeptide (Gly-Asn). 3 cysteine pairs are disulfide-bonded: C4–C21, C8–C23, and C13–C28.

In terms of processing, contains 3 disulfide bonds. Post-translationally, this is a cyclic peptide. In terms of tissue distribution, expressed in root, seed and nodule but not in flower, stem, shoot, leaf and pod.

Its function is as follows. Probably participates in a plant defense mechanism. This is Cyclotide cter-D from Clitoria ternatea (Butterfly pea).